A 403-amino-acid chain; its full sequence is Enoyl-[acyl-carrier-protein] reductase [NADH] (403 aa).

NAD(+) contacts are provided by residues 49-54 (GASSGY), 75-76 (FE), 112-113 (DA), and 141-142 (LA). Tyrosine 227 provides a ligand contact to substrate. Tyrosine 237 serves as the catalytic Proton donor. Residues lysine 246 and 276–278 (VVT) contribute to the NAD(+) site.

Belongs to the TER reductase family. As to quaternary structure, monomer.

It catalyses the reaction a 2,3-saturated acyl-[ACP] + NAD(+) = a (2E)-enoyl-[ACP] + NADH + H(+). Its pathway is lipid metabolism; fatty acid biosynthesis. Its function is as follows. Involved in the final reduction of the elongation cycle of fatty acid synthesis (FAS II). Catalyzes the reduction of a carbon-carbon double bond in an enoyl moiety that is covalently linked to an acyl carrier protein (ACP). This is Enoyl-[acyl-carrier-protein] reductase [NADH] from Pseudomonas putida (strain ATCC 47054 / DSM 6125 / CFBP 8728 / NCIMB 11950 / KT2440).